The following is a 155-amino-acid chain: Small ribosomal subunit protein uS7cz/uS7cy (155 aa).

Belongs to the universal ribosomal protein uS7 family. Part of the 30S ribosomal subunit.

It is found in the plastid. The protein resides in the chloroplast. In terms of biological role, one of the primary rRNA binding proteins, it binds directly to 16S rRNA where it nucleates assembly of the head domain of the 30S subunit. The chain is Small ribosomal subunit protein uS7cz/uS7cy (rps7-A) from Vitis vinifera (Grape).